A 667-amino-acid chain; its full sequence is Small ribosomal subunit protein mS39 (667 aa).

The transit peptide at 1-11 directs the protein to the mitochondrion; the sequence is MASSCSQALRH. Residues 199 to 226 form a disordered region; sequence EAEQRSEEMEDIQDETQTKKGRSPKASD. PPR repeat units lie at residues 249-283, 284-323, 324-360, 361-400, 482-516, and 565-599; these read NTRS…RLKA, DVHI…KVKP, NLLT…SIEP, SLAS…SFTP, SSNA…GHGN, and TASS…NRVP.

The protein belongs to the mitochondrion-specific ribosomal protein mS39 family.

The protein localises to the mitochondrion. Its function is as follows. Mitochondrial RNA-binding protein that may have a role in mitochondrial translation. This Danio rerio (Zebrafish) protein is Small ribosomal subunit protein mS39 (ptcd3).